An 858-amino-acid polypeptide reads, in one-letter code: MPSALAIFTCRPNSHPFQERHVYLDEPIKIGRSVARCRPAQNNATFDCKVLSRNHALVWFDHKTSKFYLQDTKSSNGTFINSQRLSRGSEESPPCEILSGDIIQFGVDVTENTRKVVTHGCIVSTIKLFLPDGMEARLRSDDVIHAPLPSPVDKVAANTPSMYSQELFQLSQYLQEALHREQMLEQKLATLQRLLAITQEASDTSWQALIDEDRLLSRLEVMGNQLQACSKNQTEDSLRKELVALQEDKHSYETTAKESLRRVLQEKIEVVRKLSEVERSLSNTEDECTHLREMNERTQEELRELANKYNGAVNEIKDLSDKLKAAEGKQEEIQQKGQAEKKELQAKIDDMEEKEQELQAKIEALQADNDFTNERLTALQVVRLEPLQEKTLKECSSLGGIQVDDFLPKINGSTEKEERLLSKSGGDCTFIHQFIECQKKKLMVQGHLTKVVEESKLSKEENQAKAKESDLSDTLSPSKEKSSDDTTDDAQMDEQDLNEPLAKVSLLKDDDLQGTQAETEAKQDTQHLRKELVEAQELARASKQKCFDLQAALLEEERKAYRNQVEESAKQIQVLQVVQLQRLHMDMENLQEEKDTEISSTRDKLLSAQDEILLLHQAAAKAVSERDTDFMSLQEELKKVRAELEGWRKAASEYEEEIRSLQSTFQLRCQQCEVQQREEATRLQGGELEKLKKEWDVLENECRSLKKENVLLSSELQRQEKELHNNSQKQSLELTSDLSILQMTRKELENQMGSLKEQHLRDEADLKTLLSKAENQAKDVQKEYEKTQTVLSELKLKFEMTEQEKQSITDELKQCKDNLKLLREKGNNKPWPWMPMVAALVAVTAMVLYVPGLARASP.

A necessary for targeting to centrosomes region spans residues 1-165 (MPSALAIFTC…AANTPSMYSQ (165 aa)). The Cytoplasmic portion of the chain corresponds to 1–832 (MPSALAIFTC…REKGNNKPWP (832 aa)). The FHA domain occupies 28–85 (IKIGRSVARCRPAQNNATFDCKVLSRNHALVWFDHKTSKFYLQDTKSSNGTFINSQRL). Ser150 bears the Phosphoserine mark. 2 coiled-coil regions span residues 169 to 204 (QLSQ…ASDT) and 232 to 381 (NQTE…ALQV). A compositionally biased stretch (basic and acidic residues) spans 456 to 470 (KLSKEENQAKAKESD). Positions 456-492 (KLSKEENQAKAKESDLSDTLSPSKEKSSDDTTDDAQM) are disordered. A phosphoserine mark is found at Ser472 and Ser476. A coiled-coil region spans residues 516–829 (QAETEAKQDT…KLLREKGNNK (314 aa)). Residues 833-853 (WMPMVAALVAVTAMVLYVPGL) form a helical; Anchor for type IV membrane protein membrane-spanning segment. Over 854-858 (ARASP) the chain is Extracellular.

This sequence belongs to the SLMAP family. Homodimer. Interacts with myosin. Interacts with SIKE1 and both associate with the STRIPAK core complex composed of PP2A catalytic and scaffolding subunits, the striatins (PP2A regulatory subunits), the striatin-associated proteins MOB4, STRIP1 and STRIP2, PDCD10 and members of the STE20 kinases, such as STK24 and STK26. Interacts (via FHA domain) with STK3 (when phosphorylated); the interaction associates STK3 with the STRIPAK complex.

The protein localises to the cell membrane. It localises to the sarcolemma. Its subcellular location is the cytoplasm. It is found in the cytoskeleton. The protein resides in the microtubule organizing center. The protein localises to the centrosome. It localises to the endoplasmic reticulum membrane. Its subcellular location is the mitochondrion membrane. Functionally, associates with the striatin-interacting phosphatase and kinase (STRIPAK) core complex, forming the extended (SIKE1:SLMAP)STRIPAK complex. The (SIKE1:SLMAP)STRIPAK complex dephosphorylates STK3 leading to the inhibition of Hippo signaling and the control of cell growth. May play a role during myoblast fusion. This is Sarcolemmal membrane-associated protein (Slmap) from Rattus norvegicus (Rat).